The sequence spans 224 residues: Ribosomal RNA large subunit methyltransferase E (224 aa).

5 residues coordinate S-adenosyl-L-methionine: glycine 60, tryptophan 62, aspartate 93, aspartate 109, and aspartate 137. The active-site Proton acceptor is the lysine 177.

The protein belongs to the class I-like SAM-binding methyltransferase superfamily. RNA methyltransferase RlmE family.

The protein resides in the cytoplasm. It catalyses the reaction uridine(2552) in 23S rRNA + S-adenosyl-L-methionine = 2'-O-methyluridine(2552) in 23S rRNA + S-adenosyl-L-homocysteine + H(+). Its function is as follows. Specifically methylates the uridine in position 2552 of 23S rRNA at the 2'-O position of the ribose in the fully assembled 50S ribosomal subunit. This is Ribosomal RNA large subunit methyltransferase E from Polynucleobacter asymbioticus (strain DSM 18221 / CIP 109841 / QLW-P1DMWA-1) (Polynucleobacter necessarius subsp. asymbioticus).